Consider the following 458-residue polypeptide: tRNA(Ile)-lysidine synthase (458 aa).

36-41 (SGGADS) contacts ATP.

The protein belongs to the tRNA(Ile)-lysidine synthase family.

It localises to the cytoplasm. The enzyme catalyses cytidine(34) in tRNA(Ile2) + L-lysine + ATP = lysidine(34) in tRNA(Ile2) + AMP + diphosphate + H(+). In terms of biological role, ligates lysine onto the cytidine present at position 34 of the AUA codon-specific tRNA(Ile) that contains the anticodon CAU, in an ATP-dependent manner. Cytidine is converted to lysidine, thus changing the amino acid specificity of the tRNA from methionine to isoleucine. The chain is tRNA(Ile)-lysidine synthase from Protochlamydia amoebophila (strain UWE25).